Here is a 782-residue protein sequence, read N- to C-terminus: Coiled-coil alpha-helical rod protein 1 (782 aa).

Basic and acidic residues-rich tracts occupy residues 62–74 and 208–218; these read ERDVSSDRQEPGR and ETRRAGEAKEL. 2 disordered regions span residues 62–82 and 177–218; these read ERDVSSDRQEPGRRGRSWGLE and EQLS…AKEL. Coiled coils occupy residues 111 to 303, 344 to 437, and 498 to 691; these read LRET…SLTH, LMVQ…NAVS, and VTDV…QQEG.

As to expression, found in all tissues tested, abundantly expressed in heart, liver, skeletal muscle, kidney and pancreas, and to a lesser extent in lung and placenta. Overexpressed in keratinocytes of psoriatic lesions.

It localises to the cytoplasm. It is found in the nucleus. Its function is as follows. May be a regulator of keratinocyte proliferation or differentiation. This is Coiled-coil alpha-helical rod protein 1 (CCHCR1) from Homo sapiens (Human).